A 345-amino-acid chain; its full sequence is DNA-directed RNA polymerase subunit alpha (345 aa).

The interval 1–241 is alpha N-terminal domain (alpha-NTD); that stretch reads MLRDTHLALQ…DQLGMFINFE (241 aa). The alpha C-terminal domain (alpha-CTD) stretch occupies residues 257 to 345; that stretch reads FNPNLLRKVD…ELVKRSDNPF (89 aa).

The protein belongs to the RNA polymerase alpha chain family. As to quaternary structure, homodimer. The RNAP catalytic core consists of 2 alpha, 1 beta, 1 beta' and 1 omega subunit. When a sigma factor is associated with the core the holoenzyme is formed, which can initiate transcription.

It catalyses the reaction RNA(n) + a ribonucleoside 5'-triphosphate = RNA(n+1) + diphosphate. Functionally, DNA-dependent RNA polymerase catalyzes the transcription of DNA into RNA using the four ribonucleoside triphosphates as substrates. This is DNA-directed RNA polymerase subunit alpha from Acidiphilium cryptum (strain JF-5).